A 1464-amino-acid chain; its full sequence is MSDKFKLLLKQIHFPQHEEAYNEIKSGSIESVKLFKSKRQWFFVFSFRNLLSYETFTLFDNLLHSSFDSLGAKVSYMINVEDISCDQSLLEAYFSYALDILKSSHFSIYSLFSNLGIEISNNSISVKAPAHILRENLHERFIALIADVLSNVGLSNVSISVLEDKEASSSLEEAYETNKISLQEEAESQARQALQSIVQSSPVPPPQKHQAQNFAEKQSQRVASFDKAEITPMIEVNSEENRIVFEGYIFDVEQRETKTGRIIINFKVTDYTSSFAMQRWVKDSEELVKFGMIKKGNWVRVRGRIENNPFTHSLTMNVQDIKEISHTPRKDLMPEGQKRVEFHAHTNMSTMDAIPTVEELIDTAAFWGHPAVAITDHANVQSFPHGYHKAKKAGIKAIFGLEANLVEDKVPIVYNSENLELKEATYVVFDVETTGLSAVHNDLIQIAASKMHKGNIVEQFDEFIDPGYPLSAFTTELTGITDNHVKGAKPLVQVLQEFQEFCKGAVLVAHNATFDVGFMNANYERHQLPTISQPVIDTLEFARNLYPEYKRHGLGPLTKRFGVALDHHHMANYDAEATGRLLFIFIKDVFEKHGLTNLEQLNTELVSDDSYKKSRVKHATLYVQNQTGLKNIFKLVSLSNVSYFEGVARIPRKVLDEYREGIIVGSACADGEVFDTLLSHGIDKAVEVAKYYDFIEVMPPAIYAPLIAKDLIKDEGAIEQLIRDLIEVANRLDKPVLATGNVHYINPEDAIYREIIVRALGQGAMINRPIGKEENAQPAPLPEAHFRTTNEMLDEFAFLGKDLAYEIVVANTQAMANQIEEVEVVKKDLYTPYIDRAEEQVAEMTYAKAFELYGNPLPDIIDLRIEKELSSILGNGFAVIYLASQMLVNRSNERGYLVGSRGSVGSSFVATMIGITEVNPMPPHYLCPKCQHSEFITDGSYGSGFDLPDKECSECGTEYKKDGQDIPFETFLGFDGDKVPDIDLNFSGDDQPSAHLDVRDIFGEQYAFRAGTVGTVADRTAYGFVKGYERDYNKFYRDAEVDRLAMGVAGVKRNTGQHPGGIVVIPNYMDVYDFTPVQYPADDVTAAWQTTHFNFHDIDENVLKLDILGHDDPTMIRKLQDLSGIDPKDIRADDPDVMKLFSGTEVLGVTPEQIGTSTGVLGIPEFGTNFVRGMVEETHPTTFAELLQLSGLSHGTDVWLGNAQDLIKEGIATLKTVIGCRDDIMVYLMHAGLDPKMAFTIMERVRKGMWLKISEEERNGYIQAMRENNVPDWYIESCGKIKYMFPKAHAAAYVMMALRVAYFKVHHPIYYYCAYFSIRAKAFELKTMSAGLDAVKARMEDIKEKRQRNEATNLENDLFTTLEIVNEMLERGFTFGQLDLYKSQATEFLIEGDTLIPPFIALEGLGENVAKQLVAAREEGEFLSKTELRKRGGLSSTLVERLDEMGILGNMPEDNQLSLFDDFF.

Residues 426 to 582 enclose the Exonuclease domain; that stretch reads YVVFDVETTG…YDAEATGRLL (157 aa).

It belongs to the DNA polymerase type-C family. PolC subfamily.

It localises to the cytoplasm. The catalysed reaction is DNA(n) + a 2'-deoxyribonucleoside 5'-triphosphate = DNA(n+1) + diphosphate. Its function is as follows. Required for replicative DNA synthesis. This DNA polymerase also exhibits 3' to 5' exonuclease activity. This Streptococcus thermophilus (strain CNRZ 1066) protein is DNA polymerase III PolC-type.